A 753-amino-acid chain; its full sequence is 5-methyltetrahydropteroyltriglutamate--homocysteine methyltransferase (753 aa).

5-methyltetrahydropteroyltri-L-glutamate is bound by residues 17 to 20 (RELK) and lysine 117. L-homocysteine contacts are provided by residues 431–433 (IGS) and glutamate 484. Residues 431–433 (IGS) and glutamate 484 each bind L-methionine. Residues 515-516 (RC) and tryptophan 561 each bind 5-methyltetrahydropteroyltri-L-glutamate. L-homocysteine is bound at residue aspartate 599. Aspartate 599 serves as a coordination point for L-methionine. Residue glutamate 605 participates in 5-methyltetrahydropteroyltri-L-glutamate binding. Positions 641, 643, and 665 each coordinate Zn(2+). The Proton donor role is filled by histidine 694. Cysteine 726 contributes to the Zn(2+) binding site.

It belongs to the vitamin-B12 independent methionine synthase family. It depends on Zn(2+) as a cofactor.

It catalyses the reaction 5-methyltetrahydropteroyltri-L-glutamate + L-homocysteine = tetrahydropteroyltri-L-glutamate + L-methionine. Its pathway is amino-acid biosynthesis; L-methionine biosynthesis via de novo pathway; L-methionine from L-homocysteine (MetE route): step 1/1. Catalyzes the transfer of a methyl group from 5-methyltetrahydrofolate to homocysteine resulting in methionine formation. This Escherichia coli O1:K1 / APEC protein is 5-methyltetrahydropteroyltriglutamate--homocysteine methyltransferase.